Here is a 189-residue protein sequence, read N- to C-terminus: Adenylate kinase (189 aa).

Gly11–Thr16 contributes to the ATP binding site. An NMP region spans residues Ser31–Leu60. AMP-binding positions include Thr32, Arg37, Gln58–Leu60, Gly86–Arg89, and Gln93. The LID stretch occupies residues Lys127–Asp137. ATP is bound at residue Arg128. AMP is bound by residues Arg134 and Arg145. Residue Gly173 coordinates ATP.

The protein belongs to the adenylate kinase family. As to quaternary structure, monomer.

The protein localises to the cytoplasm. It carries out the reaction AMP + ATP = 2 ADP. It participates in purine metabolism; AMP biosynthesis via salvage pathway; AMP from ADP: step 1/1. Its function is as follows. Catalyzes the reversible transfer of the terminal phosphate group between ATP and AMP. Plays an important role in cellular energy homeostasis and in adenine nucleotide metabolism. The sequence is that of Adenylate kinase from Phocaeicola vulgatus (strain ATCC 8482 / DSM 1447 / JCM 5826 / CCUG 4940 / NBRC 14291 / NCTC 11154) (Bacteroides vulgatus).